The following is a 315-amino-acid chain: Ribose-phosphate pyrophosphokinase (315 aa).

Residues 37–39 (DGE) and 96–97 (RQ) each bind ATP. H131 and D170 together coordinate Mg(2+). Residue K194 is part of the active site. D-ribose 5-phosphate-binding positions include R196, D220, and 224-228 (DTGGT).

It belongs to the ribose-phosphate pyrophosphokinase family. Class I subfamily. In terms of assembly, homohexamer. Requires Mg(2+) as cofactor.

The protein localises to the cytoplasm. The enzyme catalyses D-ribose 5-phosphate + ATP = 5-phospho-alpha-D-ribose 1-diphosphate + AMP + H(+). Its pathway is metabolic intermediate biosynthesis; 5-phospho-alpha-D-ribose 1-diphosphate biosynthesis; 5-phospho-alpha-D-ribose 1-diphosphate from D-ribose 5-phosphate (route I): step 1/1. Functionally, involved in the biosynthesis of the central metabolite phospho-alpha-D-ribosyl-1-pyrophosphate (PRPP) via the transfer of pyrophosphoryl group from ATP to 1-hydroxyl of ribose-5-phosphate (Rib-5-P). This Salmonella typhi protein is Ribose-phosphate pyrophosphokinase.